The chain runs to 347 residues: Nicotinate-nucleotide--dimethylbenzimidazole phosphoribosyltransferase (347 aa).

The active-site Proton acceptor is Glu316.

The protein belongs to the CobT family.

It carries out the reaction 5,6-dimethylbenzimidazole + nicotinate beta-D-ribonucleotide = alpha-ribazole 5'-phosphate + nicotinate + H(+). The protein operates within nucleoside biosynthesis; alpha-ribazole biosynthesis; alpha-ribazole from 5,6-dimethylbenzimidazole: step 1/2. In terms of biological role, catalyzes the synthesis of alpha-ribazole-5'-phosphate from nicotinate mononucleotide (NAMN) and 5,6-dimethylbenzimidazole (DMB). The chain is Nicotinate-nucleotide--dimethylbenzimidazole phosphoribosyltransferase from Vibrio campbellii (strain ATCC BAA-1116).